A 95-amino-acid chain; its full sequence is Co-chaperonin GroES (95 aa).

The protein belongs to the GroES chaperonin family. As to quaternary structure, heptamer of 7 subunits arranged in a ring. Interacts with the chaperonin GroEL.

The protein resides in the cytoplasm. In terms of biological role, together with the chaperonin GroEL, plays an essential role in assisting protein folding. The GroEL-GroES system forms a nano-cage that allows encapsulation of the non-native substrate proteins and provides a physical environment optimized to promote and accelerate protein folding. GroES binds to the apical surface of the GroEL ring, thereby capping the opening of the GroEL channel. The protein is Co-chaperonin GroES of Francisella tularensis subsp. tularensis (strain FSC 198).